The following is a 183-amino-acid chain: Bifunctional protein PyrR (183 aa).

Residues 102–114 carry the PRPP-binding motif; the sequence is VVLVDDVLYTGRT.

This sequence belongs to the purine/pyrimidine phosphoribosyltransferase family. PyrR subfamily. Homodimer and homohexamer; in equilibrium.

It carries out the reaction UMP + diphosphate = 5-phospho-alpha-D-ribose 1-diphosphate + uracil. Its function is as follows. Regulates transcriptional attenuation of the pyrimidine nucleotide (pyr) operon by binding in a uridine-dependent manner to specific sites on pyr mRNA. This disrupts an antiterminator hairpin in the RNA and favors formation of a downstream transcription terminator, leading to a reduced expression of downstream genes. Also displays a weak uracil phosphoribosyltransferase activity which is not physiologically significant. This is Bifunctional protein PyrR from Listeria monocytogenes serotype 4a (strain HCC23).